We begin with the raw amino-acid sequence, 118 residues long: ATP synthase subunit gamma, chloroplastic (118 aa).

A disulfide bond links Cys-30 and Cys-36.

The protein belongs to the ATPase gamma chain family. As to quaternary structure, F-type ATPases have 2 components, CF(1) - the catalytic core - and CF(0) - the membrane proton channel. CF(1) has five subunits: alpha(3), beta(3), gamma(1), delta(1), epsilon(1). CF(0) has four main subunits: a, b, b' and c.

The protein resides in the plastid. The protein localises to the chloroplast thylakoid membrane. Produces ATP from ADP in the presence of a proton gradient across the membrane. The gamma chain is believed to be important in regulating ATPase activity and the flow of protons through the CF(0) complex. Functionally, inceptin is a proteolytic fragment produced by insect larvae that previously ingested the protein. This peptide mediate plant perception of herbivory through the induction of volatile, phenylpropanoid and protease inhibitor defenses such as ethylene, jasmonic acid and salicylic acid for example. The polypeptide is ATP synthase subunit gamma, chloroplastic (Vigna unguiculata (Cowpea)).